The primary structure comprises 445 residues: Glycine--tRNA ligase (445 aa).

Positions 97 and 145 each coordinate substrate. ATP contacts are provided by residues 177–179 (RNE), 187–192 (FRTCEF), 262–263 (EV), and 308–311 (GLTR). A substrate-binding site is contributed by 192-196 (FEQME). 304 to 308 (ETSAG) lines the substrate pocket.

Belongs to the class-II aminoacyl-tRNA synthetase family. Homodimer.

It localises to the cytoplasm. It carries out the reaction tRNA(Gly) + glycine + ATP = glycyl-tRNA(Gly) + AMP + diphosphate. Catalyzes the attachment of glycine to tRNA(Gly). The chain is Glycine--tRNA ligase from Borreliella burgdorferi (strain ATCC 35210 / DSM 4680 / CIP 102532 / B31) (Borrelia burgdorferi).